The primary structure comprises 564 residues: 4-hydroxy-7-methoxy-3-oxo-3,4-dihydro-2H-1,4-benzoxazin-2-yl glucoside beta-D-glucosidase 1d, chloroplastic (564 aa).

Residues 1–50 (MALLAAATLNPTTHLSLRSRAGRNSENLWLRSAASSQKSKGRFCNLTVRA) constitute a chloroplast transit peptide. A beta-D-glucoside-binding positions include Gln92, His194, and 239-240 (NE). The Proton donor role is filled by Glu240. Cysteines 259 and 265 form a disulfide. Residues Tyr383, Glu456, Trp504, 511 to 512 (EW), and Phe520 each bind a beta-D-glucoside. The Nucleophile role is filled by Glu456.

This sequence belongs to the glycosyl hydrolase 1 family. In terms of assembly, homo- and heterohexamers. Expressed in young seedlings early after germination.

Its subcellular location is the plastid. It localises to the chloroplast. The enzyme catalyses Hydrolysis of terminal, non-reducing beta-D-glucosyl residues with release of beta-D-glucose.. The catalysed reaction is DIMBOA beta-D-glucoside + H2O = DIMBOA + D-glucose. It catalyses the reaction DIBOA beta-D-glucoside + H2O = DIBOA + D-glucose. Functionally, acts in defense of young plant parts against pests via the production of hydroxamic acids from hydroxamic acid glucosides. Enzymatic activity is highly correlated with plant growth. The preferred substrate is DIMBOA-beta-D-glucoside. The polypeptide is 4-hydroxy-7-methoxy-3-oxo-3,4-dihydro-2H-1,4-benzoxazin-2-yl glucoside beta-D-glucosidase 1d, chloroplastic (GLU1D) (Triticum aestivum (Wheat)).